The primary structure comprises 495 residues: Regulator of G-protein signaling 7 (495 aa).

The region spanning Glu37–Thr112 is the DEP domain. Phosphoserine is present on residues Ser229 and Ser241. Residues Asn235–Asp256 are disordered. Thr243 bears the Phosphothreonine mark. The G protein gamma domain maps to Glu255–Leu316. The RGS domain occupies Gly333–Leu448. At Ser434 the chain carries Phosphoserine.

As to quaternary structure, interacts with GNB5, forming the RGS7-GNB5 complex. Interacts with GPR158; promotes the GTPase activator activity of the RGS7-GNB5 complex in absence of glycine, in contrast GTPase activator activity of the RGS7-GNB5 complex is inhibited in presence of glycine. Interacts with GPR179. Interacts with PKD1; this prevents rapid proteasomal degradation. Interacts with RGS7BP, leading to regulate the subcellular location of the heterodimer formed with GNB5. Interacts (phosphorylated form) with 14-3-3 protein YWHAQ. Interacts with SNAPIN. Interacts with GNAI1. Interacts with GNAO1, GNAI3 and GNAZ. In terms of processing, palmitoylated. Post-translationally, ubiquitinated, leading to rapid proteasomal degradation. Phosphorylation and subsequent interaction with 14-3-3 proteins inhibits GAP activity.

The protein resides in the cytoplasm. Its subcellular location is the cytosol. The protein localises to the cell membrane. It localises to the membrane. Functionally, GTPase activator component of the RGS7-GNB5 complex that regulates G protein-coupled receptor signaling cascades. The RGS7-GNB5 complex acts as an inhibitor signal transduction by promoting the GTPase activity of G protein alpha subunits, such as GNAO1, thereby driving them into their inactive GDP-bound form. May play a role in synaptic vesicle exocytosis. Glycine-dependent regulation of the RGS7-GNB5 complex by GPR158 affects mood and cognition via its ability to regulate neuronal excitability in L2/L3 pyramidal neurons of the prefrontal cortex. Modulates the activity of potassium channels that are activated by GNAO1 in response to muscarinic acetylcholine receptor M2/CHRM2 signaling. This chain is Regulator of G-protein signaling 7 (RGS7), found in Homo sapiens (Human).